Consider the following 142-residue polypeptide: Large ribosomal subunit protein uL11 (142 aa).

It belongs to the universal ribosomal protein uL11 family. As to quaternary structure, part of the ribosomal stalk of the 50S ribosomal subunit. Interacts with L10 and the large rRNA to form the base of the stalk. L10 forms an elongated spine to which L12 dimers bind in a sequential fashion forming a multimeric L10(L12)X complex. One or more lysine residues are methylated.

Its function is as follows. Forms part of the ribosomal stalk which helps the ribosome interact with GTP-bound translation factors. This Mycobacterium tuberculosis (strain ATCC 25177 / H37Ra) protein is Large ribosomal subunit protein uL11.